Consider the following 91-residue polypeptide: Small ribosomal subunit protein uS19 (91 aa).

The tract at residues 72 to 91 (GEFSPTRKFGGHGDDKKKKK) is disordered. Basic and acidic residues predominate over residues 82-91 (GHGDDKKKKK).

Belongs to the universal ribosomal protein uS19 family.

Protein S19 forms a complex with S13 that binds strongly to the 16S ribosomal RNA. This Spiroplasma kunkelii protein is Small ribosomal subunit protein uS19.